The primary structure comprises 156 residues: ATP synthase subunit b (156 aa).

The helical transmembrane segment at isoleucine 3–threonine 23 threads the bilayer.

The protein belongs to the ATPase B chain family. As to quaternary structure, F-type ATPases have 2 components, F(1) - the catalytic core - and F(0) - the membrane proton channel. F(1) has five subunits: alpha(3), beta(3), gamma(1), delta(1), epsilon(1). F(0) has three main subunits: a(1), b(2) and c(10-14). The alpha and beta chains form an alternating ring which encloses part of the gamma chain. F(1) is attached to F(0) by a central stalk formed by the gamma and epsilon chains, while a peripheral stalk is formed by the delta and b chains.

Its subcellular location is the cell inner membrane. F(1)F(0) ATP synthase produces ATP from ADP in the presence of a proton or sodium gradient. F-type ATPases consist of two structural domains, F(1) containing the extramembraneous catalytic core and F(0) containing the membrane proton channel, linked together by a central stalk and a peripheral stalk. During catalysis, ATP synthesis in the catalytic domain of F(1) is coupled via a rotary mechanism of the central stalk subunits to proton translocation. In terms of biological role, component of the F(0) channel, it forms part of the peripheral stalk, linking F(1) to F(0). The chain is ATP synthase subunit b from Xylella fastidiosa (strain M23).